Consider the following 294-residue polypeptide: Retinoic acid receptor responder protein 1 (294 aa).

Over 1–20 (MQPRRQRLPAPWSGPRGPRP) the chain is Lumenal. A helical; Signal-anchor for type III membrane protein transmembrane segment spans residues 21 to 42 (TAPLLALLLLLAPVAAPAGSGD). Cystatin LXN-type domains lie at 38 to 153 (AGSG…EKKK) and 173 to 276 (EIVS…TPEE). O-linked (Xyl...) (chondroitin sulfate) serine glycosylation is present at Ser40. Residues 43-294 (PDDPGQPQDA…AVVPTELSNF (252 aa)) lie on the Cytoplasmic side of the membrane. A disordered region spans residues 273-294 (TPEEASGTEEGSAVVPTELSNF).

This sequence belongs to the protease inhibitor I47 (latexin) family. In terms of assembly, interacts with AGBL2, KIF11 and MAPRE1. Post-translationally, not N-glycosylated. O-glycosylated; contains chondroitin sulfate. In terms of tissue distribution, detected in urine (at protein level).

It is found in the membrane. The protein resides in the secreted. In terms of biological role, inhibitor of the cytoplasmic carboxypeptidase AGBL2, may regulate the alpha-tubulin tyrosination cycle. This Homo sapiens (Human) protein is Retinoic acid receptor responder protein 1 (RARRES1).